The following is a 201-amino-acid chain: Ribosome maturation factor RimP (201 aa).

It belongs to the RimP family.

The protein resides in the cytoplasm. Its function is as follows. Required for maturation of 30S ribosomal subunits. This Rhizobium leguminosarum bv. trifolii (strain WSM2304) protein is Ribosome maturation factor RimP.